Consider the following 347-residue polypeptide: Histidinol-phosphate aminotransferase (347 aa).

At Lys209 the chain carries N6-(pyridoxal phosphate)lysine.

The protein belongs to the class-II pyridoxal-phosphate-dependent aminotransferase family. Histidinol-phosphate aminotransferase subfamily. In terms of assembly, homodimer. The cofactor is pyridoxal 5'-phosphate.

It catalyses the reaction L-histidinol phosphate + 2-oxoglutarate = 3-(imidazol-4-yl)-2-oxopropyl phosphate + L-glutamate. It functions in the pathway amino-acid biosynthesis; L-histidine biosynthesis; L-histidine from 5-phospho-alpha-D-ribose 1-diphosphate: step 7/9. This Syntrophotalea carbinolica (strain DSM 2380 / NBRC 103641 / GraBd1) (Pelobacter carbinolicus) protein is Histidinol-phosphate aminotransferase.